The following is a 244-amino-acid chain: uncharacterized protein (244 aa).

Residues 19-196 form the FCP1 homology domain; that stretch reads ATDNRKLVIL…ACVIRYLKHL (178 aa).

This is an uncharacterized protein from Schizosaccharomyces pombe (strain 972 / ATCC 24843) (Fission yeast).